A 123-amino-acid polypeptide reads, in one-letter code: Large ribosomal subunit protein uL14 (123 aa).

Belongs to the universal ribosomal protein uL14 family. Part of the 50S ribosomal subunit. Forms a cluster with proteins L3 and L19. In the 70S ribosome, L14 and L19 interact and together make contacts with the 16S rRNA in bridges B5 and B8.

In terms of biological role, binds to 23S rRNA. Forms part of two intersubunit bridges in the 70S ribosome. This chain is Large ribosomal subunit protein uL14, found in Vibrio vulnificus (strain CMCP6).